The following is a 271-amino-acid chain: GTP cyclohydrolase FolE2 (271 aa).

This sequence belongs to the GTP cyclohydrolase IV family.

It catalyses the reaction GTP + H2O = 7,8-dihydroneopterin 3'-triphosphate + formate + H(+). It participates in cofactor biosynthesis; 7,8-dihydroneopterin triphosphate biosynthesis; 7,8-dihydroneopterin triphosphate from GTP: step 1/1. Functionally, converts GTP to 7,8-dihydroneopterin triphosphate. In Geotalea uraniireducens (strain Rf4) (Geobacter uraniireducens), this protein is GTP cyclohydrolase FolE2.